The primary structure comprises 184 residues: NADH-quinone oxidoreductase subunit B (184 aa).

4 residues coordinate [4Fe-4S] cluster: Cys-63, Cys-64, Cys-128, and Cys-158.

It belongs to the complex I 20 kDa subunit family. As to quaternary structure, NDH-1 is composed of 14 different subunits. Subunits NuoB, C, D, E, F, and G constitute the peripheral sector of the complex. [4Fe-4S] cluster is required as a cofactor.

It is found in the cell inner membrane. The enzyme catalyses a quinone + NADH + 5 H(+)(in) = a quinol + NAD(+) + 4 H(+)(out). NDH-1 shuttles electrons from NADH, via FMN and iron-sulfur (Fe-S) centers, to quinones in the respiratory chain. The immediate electron acceptor for the enzyme in this species is believed to be ubiquinone. Couples the redox reaction to proton translocation (for every two electrons transferred, four hydrogen ions are translocated across the cytoplasmic membrane), and thus conserves the redox energy in a proton gradient. The sequence is that of NADH-quinone oxidoreductase subunit B from Xanthomonas oryzae pv. oryzae (strain MAFF 311018).